A 257-amino-acid polypeptide reads, in one-letter code: 1-(5-phosphoribosyl)-5-[(5-phosphoribosylamino)methylideneamino] imidazole-4-carboxamide isomerase (257 aa).

It belongs to the HisA/HisF family.

Its subcellular location is the cytoplasm. The catalysed reaction is 1-(5-phospho-beta-D-ribosyl)-5-[(5-phospho-beta-D-ribosylamino)methylideneamino]imidazole-4-carboxamide = 5-[(5-phospho-1-deoxy-D-ribulos-1-ylimino)methylamino]-1-(5-phospho-beta-D-ribosyl)imidazole-4-carboxamide. It functions in the pathway amino-acid biosynthesis; L-histidine biosynthesis; L-histidine from 5-phospho-alpha-D-ribose 1-diphosphate: step 4/9. This Neurospora crassa (strain ATCC 24698 / 74-OR23-1A / CBS 708.71 / DSM 1257 / FGSC 987) protein is 1-(5-phosphoribosyl)-5-[(5-phosphoribosylamino)methylideneamino] imidazole-4-carboxamide isomerase (his-7).